The chain runs to 152 residues: Transcriptional regulator MraZ (152 aa).

SpoVT-AbrB domains are found at residues 5-52 (ASAI…PLKE) and 81-124 (ATEC…SDAE).

The protein belongs to the MraZ family. As to quaternary structure, forms oligomers.

The protein localises to the cytoplasm. Its subcellular location is the nucleoid. This is Transcriptional regulator MraZ from Pasteurella multocida (strain Pm70).